A 274-amino-acid chain; its full sequence is 16S rRNA (guanine(1405)-N(7))-methyltransferase (274 aa).

S-adenosyl-L-methionine contacts are provided by residues 102-108, Ala133, Asp156, 182-183, Leu198, and Gln207; these read HISTRER and DL.

Belongs to the methyltransferase superfamily. Aminoglycoside resistance family.

It catalyses the reaction guanosine(1405) in 16S rRNA + S-adenosyl-L-methionine = N(7)-methylguanosine(1405) in 16S rRNA + S-adenosyl-L-homocysteine. In terms of biological role, specifically methylates the N(7) position of guanine 1405 in 16S rRNA. Confers resistance to various aminoglycosides, including gentamicin, kanamycin and sisomicin. This chain is 16S rRNA (guanine(1405)-N(7))-methyltransferase (sgm), found in Micromonospora zionensis.